Reading from the N-terminus, the 376-residue chain is Fibromodulin (376 aa).

Residues 1–18 (MQWASILLLAGLCSLSWA) form the signal peptide. Glutamine 19 carries the pyrrolidone carboxylic acid modification. A sulfotyrosine mark is found at tyrosine 20, tyrosine 38, tyrosine 45, tyrosine 47, tyrosine 50, tyrosine 53, tyrosine 55, tyrosine 63, and tyrosine 65. The LRRNT domain occupies 67 to 105 (SPPQPEPRDCPQECDCPPNFPTAMYCDNRNLKYLPFVPS). 8 LRR repeats span residues 106 to 127 (RMKY…VFDN), 130 to 151 (GLLW…KKVF), 156 to 176 (HLER…PLPR), 177 to 198 (SLRE…ALEG), 201 to 222 (NLTA…MKGL), 224 to 245 (SLIL…LPSA), 246 to 266 (LEQL…YFRG), and 269 to 289 (KLLY…ASNT). N-linked (GlcNAc...) (keratan sulfate) asparagine glycosylation is present at asparagine 127. Asparagine 166 carries N-linked (GlcNAc...) (keratan sulfate) asparagine glycosylation. Asparagine 201 carries N-linked (GlcNAc...) (keratan sulfate) asparagine glycosylation. Asparagine 291 carries an N-linked (GlcNAc...) (keratan sulfate) asparagine glycan. LRR repeat units lie at residues 294–315 (SLLE…STNL) and 316–335 (ENLY…SFCT). A disulfide bridge connects residues cysteine 334 and cysteine 367. N-linked (GlcNAc...) asparagine glycosylation is present at asparagine 341. Residues 344–365 (KLQVLRLDGNEIKRSAMPADAP) form an LRR 11 repeat.

This sequence belongs to the small leucine-rich proteoglycan (SLRP) family. SLRP class II subfamily. In terms of assembly, binds to type I and type II collagen. Post-translationally, binds keratan sulfate chains.

The protein localises to the secreted. It localises to the extracellular space. The protein resides in the extracellular matrix. Functionally, affects the rate of fibrils formation. May have a primary role in collagen fibrillogenesis. This Bos taurus (Bovine) protein is Fibromodulin (FMOD).